A 75-amino-acid polypeptide reads, in one-letter code: Salivary glue protein Sgs-8 (75 aa).

Residues 1–24 (MKLLVVAVIACIMLIGFADPASGC) form the signal peptide.

The chain is Salivary glue protein Sgs-8 (Sgs8) from Drosophila melanogaster (Fruit fly).